Consider the following 101-residue polypeptide: uncharacterized protein (101 aa).

This is an uncharacterized protein from Schizosaccharomyces pombe (strain 972 / ATCC 24843) (Fission yeast).